The primary structure comprises 307 residues: MNEFWLQINIIVPAAGIDLVCHEMTELGSAGITVEERALDTFVVPDPDADIPETLILKVYFPPEIEPEQLARQVAERLAWLAPLIPGLEVVTPEISRVRAEDWAENWKQHFGIQRIGSRLVIRPTWEAFSPDPQDAVLTLDPGMAFGTGSHATTRLCLEALAELYETPPGPQRVLDVGTGSGILAVAAALLGAGQVLGCDIDETACQVALDNARQNGVIEQIAVTLDPLETLGGDFDVVLANILAEENARLAPELVHRLAPGGVLILSGILNEKEQLVIDAFAGRGLTGPDIRRQDEWSCLCYIKEA.

T154, G178, D200, and N242 together coordinate S-adenosyl-L-methionine.

It belongs to the methyltransferase superfamily. PrmA family.

Its subcellular location is the cytoplasm. It carries out the reaction L-lysyl-[protein] + 3 S-adenosyl-L-methionine = N(6),N(6),N(6)-trimethyl-L-lysyl-[protein] + 3 S-adenosyl-L-homocysteine + 3 H(+). Functionally, methylates ribosomal protein L11. The polypeptide is Ribosomal protein L11 methyltransferase (Syntrophotalea carbinolica (strain DSM 2380 / NBRC 103641 / GraBd1) (Pelobacter carbinolicus)).